We begin with the raw amino-acid sequence, 127 residues long: Large ribosomal subunit protein bL12 (127 aa).

The protein belongs to the bacterial ribosomal protein bL12 family. In terms of assembly, homodimer. Part of the ribosomal stalk of the 50S ribosomal subunit. Forms a multimeric L10(L12)X complex, where L10 forms an elongated spine to which 2 to 4 L12 dimers bind in a sequential fashion. Binds GTP-bound translation factors.

In terms of biological role, forms part of the ribosomal stalk which helps the ribosome interact with GTP-bound translation factors. Is thus essential for accurate translation. The protein is Large ribosomal subunit protein bL12 of Pelobacter propionicus (strain DSM 2379 / NBRC 103807 / OttBd1).